The following is a 507-amino-acid chain: MINVAILSAIRRWHFRDGASIREIARRSGLSRNTVRKYLQSKVVEPQYPARDSVGKLSPFEPKLRQWLSTEHKKTKKLRRNLRSMYRDLVALGFTGSYDRVCAFARQWKDSEQFKAQTSGKGCFIPLRFACGEAFQFDWSEDFARIAGKQVKLQIAQFKLAHSRAFVLRAYYQQKHEMLFDAHWHAFQIFGGIPKRGIYDNMKTAVDSVGRGKERRVNQRFTAMVSHYLFDAQFCNPASGWEKGQIEKNVQDSRQRLWQGAPDFQSLADLNVWLEHRCKALWSELRHPELDQTVQEAFADEQGELMALPNAFDAFVEQTKRVTSTCLVHHEGNRYSVPASYANRAISLRIYADKLVMAAEGQHIAEHPRLFGSGHARRGHTQYDWHHYLSVLQKKPGALRNGAPFAELPPAFKKLQSILLQRPGGDRDMVEILALVLHHDEGAVLSAVELALECGKPSKEHVLNLLGRLTEEPPPKPIPIPKGLRLTLEPQANVNRYDSLRRAHDAA.

The HTH IS21-type domain occupies 6–68 (ILSAIRRWHF…PFEPKLRQWL (63 aa)). A DNA-binding region (H-T-H motif) is located at residues 19-40 (ASIREIARRSGLSRNTVRKYLQ). The 181-residue stretch at 122–302 (GCFIPLRFAC…TVQEAFADEQ (181 aa)) folds into the Integrase catalytic domain.

Belongs to the transposase IS21/IS408/IS1162 family.

Required for the transposition of the insertion element. The chain is Transposase for insertion sequences IS1326/IS1353 (istA) from Pseudomonas aeruginosa.